The chain runs to 423 residues: UDP-N-acetylglucosamine 1-carboxyvinyltransferase 1 (423 aa).

Residue 23-24 (KN) coordinates phosphoenolpyruvate. Residue R96 participates in UDP-N-acetyl-alpha-D-glucosamine binding. C120 functions as the Proton donor in the catalytic mechanism. C120 is modified (2-(S-cysteinyl)pyruvic acid O-phosphothioketal). Residues 125-129 (RPIDL), D309, and V331 each bind UDP-N-acetyl-alpha-D-glucosamine.

This sequence belongs to the EPSP synthase family. MurA subfamily.

The protein localises to the cytoplasm. It catalyses the reaction phosphoenolpyruvate + UDP-N-acetyl-alpha-D-glucosamine = UDP-N-acetyl-3-O-(1-carboxyvinyl)-alpha-D-glucosamine + phosphate. Its pathway is cell wall biogenesis; peptidoglycan biosynthesis. Its function is as follows. Cell wall formation. Adds enolpyruvyl to UDP-N-acetylglucosamine. The chain is UDP-N-acetylglucosamine 1-carboxyvinyltransferase 1 from Streptococcus thermophilus (strain ATCC BAA-250 / LMG 18311).